The following is a 59-amino-acid chain: UPF0391 membrane protein lpg2521 (59 aa).

A run of 2 helical transmembrane segments spans residues 5-25 (ALIFFIIAIIAAAFGFGGIAV) and 30-50 (IAKILFFLFLVMFVIFLIMGL).

This sequence belongs to the UPF0391 family.

The protein resides in the cell membrane. The sequence is that of UPF0391 membrane protein lpg2521 from Legionella pneumophila subsp. pneumophila (strain Philadelphia 1 / ATCC 33152 / DSM 7513).